The following is a 237-amino-acid chain: Cyclic-di-GMP-binding biofilm dispersal mediator protein (237 aa).

10–34 (LILGGSRGIGAAIVRRFVTDGANVR) serves as a coordination point for NAD(+). A substrate-binding site is contributed by Ser-132. The Proton acceptor role is filled by Tyr-146.

This sequence belongs to the short-chain dehydrogenases/reductases (SDR) family.

Increases biofilm dispersal. Acts by binding directly to the signaling molecule cyclic-di-GMP, which decreases the intracellular concentration of cyclic-di-GMP and leads to biofilm dispersal. Also controls other biofilm-related phenotypes such as cell motility, cell size, cell aggregation and production of extracellular DNA and extracellular polysaccharides (EPS). Does not act as a phosphodiesterase. The sequence is that of Cyclic-di-GMP-binding biofilm dispersal mediator protein (bdcA) from Escherichia coli (strain K12).